A 283-amino-acid polypeptide reads, in one-letter code: Mitochondrial outer membrane protein porin (283 aa).

This sequence belongs to the eukaryotic mitochondrial porin family.

It is found in the mitochondrion outer membrane. Its function is as follows. Forms a channel through the cell membrane that allows diffusion of small hydrophilic molecules. The channel adopts an open conformation at low or zero membrane potential and a closed conformation at potentials above 30-40 mV. The open state has a weak anion selectivity whereas the closed state is cation-selective. This is Mitochondrial outer membrane protein porin from Neurospora crassa (strain ATCC 24698 / 74-OR23-1A / CBS 708.71 / DSM 1257 / FGSC 987).